Reading from the N-terminus, the 231-residue chain is LexA repressor (231 aa).

The disordered stretch occupies residues 1–24 (MTDRKEHKMKPGRRPTEGMTPSQE). A DNA-binding region (H-T-H motif) is located at residues 43–62 (VKEIAEALGMKTPSAHEQVQ). Residues S146 and K183 each act as for autocatalytic cleavage activity in the active site.

The protein belongs to the peptidase S24 family. In terms of assembly, homodimer.

The enzyme catalyses Hydrolysis of Ala-|-Gly bond in repressor LexA.. In terms of biological role, represses a number of genes involved in the response to DNA damage (SOS response), including recA and lexA. In the presence of single-stranded DNA, RecA interacts with LexA causing an autocatalytic cleavage which disrupts the DNA-binding part of LexA, leading to derepression of the SOS regulon and eventually DNA repair. This is LexA repressor from Magnetococcus marinus (strain ATCC BAA-1437 / JCM 17883 / MC-1).